The primary structure comprises 361 residues: sn-glycerol-3-phosphate import ATP-binding protein UgpC (361 aa).

In terms of domain architecture, ABC transporter spans 4-235 (LSLKGVRKSY…PATVFVAGFI (232 aa)). 37 to 44 (GPSGCGKS) provides a ligand contact to ATP.

It belongs to the ABC transporter superfamily. sn-glycerol-3-phosphate importer (TC 3.A.1.1.3) family. The complex is composed of two ATP-binding proteins (UgpC), two transmembrane proteins (UgpA and UgpE) and a solute-binding protein (UgpB).

It localises to the cell inner membrane. The catalysed reaction is sn-glycerol 3-phosphate(out) + ATP + H2O = sn-glycerol 3-phosphate(in) + ADP + phosphate + H(+). In terms of biological role, part of the ABC transporter complex UgpBAEC involved in sn-glycerol-3-phosphate (G3P) import. Responsible for energy coupling to the transport system. This is sn-glycerol-3-phosphate import ATP-binding protein UgpC from Burkholderia cenocepacia (strain HI2424).